Reading from the N-terminus, the 668-residue chain is Myb-like protein W (668 aa).

6 disordered regions span residues 57-124 (LDQF…NESV), 246-357 (EKEK…EEEV), 403-432 (KPKSKLKSSSKPGIPTSPITMKTNPHTDKG), 497-546 (YTNT…NKER), 561-583 (SMGRFSAKPPPIKTTTTTTTTTS), and 631-668 (QCEERKKKEDRDVDEDGEDDYYFGGDNSKNGDDDDEII). The segment covering 69-121 (NNNNNNNSNNNNNNNNNNNNNNNNNNNNNNNNNNNNNNNNNNYNNYNNNNNNN) has biased composition (low complexity). Positions 246 to 268 (EKEKRKKEREEREEREKQEKQEQ) are enriched in basic and acidic residues. The span at 293-307 (NNKDNNHNGYYYYYD) shows a compositional bias: low complexity. The segment covering 308 to 318 (NDNDNYNDGDD) has biased composition (acidic residues). Over residues 319–335 (EKEKEKEKEKEKEKENE) the composition is skewed to basic and acidic residues. Residues 344-398 (TSMVNSEEWTEEEVNKMNEIRGKLSTADYNYWDKVSAHVKSKTAEQCQRKYNSRF) form the Myb-like domain. Residues 501-542 (NNNNNNNNNNNNNNNNNNNNNNNNNNNNNNNNNNNNNNNNNN) are compositionally biased toward low complexity. The span at 632–641 (CEERKKKEDR) shows a compositional bias: basic and acidic residues. Positions 642 to 651 (DVDEDGEDDY) are enriched in acidic residues.

The sequence is that of Myb-like protein W (mybW) from Dictyostelium discoideum (Social amoeba).